A 504-amino-acid polypeptide reads, in one-letter code: Glycerol kinase (504 aa).

Threonine 13 is an ADP binding site. Residues threonine 13, threonine 14, and serine 15 each coordinate ATP. Sn-glycerol 3-phosphate is bound at residue threonine 13. Arginine 17 contacts ADP. 3 residues coordinate sn-glycerol 3-phosphate: arginine 83, glutamate 84, and tyrosine 135. Glycerol is bound by residues arginine 83, glutamate 84, and tyrosine 135. Histidine 231 bears the Phosphohistidine; by HPr mark. Position 245 (aspartate 245) interacts with sn-glycerol 3-phosphate. Residues aspartate 245 and glutamine 246 each coordinate glycerol. ADP is bound by residues threonine 267 and glycine 310. ATP is bound by residues threonine 267, glycine 310, glutamine 314, and glycine 411. 2 residues coordinate ADP: glycine 411 and asparagine 415.

This sequence belongs to the FGGY kinase family. Homotetramer and homodimer (in equilibrium). In terms of processing, the phosphoenolpyruvate-dependent sugar phosphotransferase system (PTS), including enzyme I, and histidine-containing protein (HPr) are required for the phosphorylation, which leads to the activation of the enzyme.

The catalysed reaction is glycerol + ATP = sn-glycerol 3-phosphate + ADP + H(+). It functions in the pathway polyol metabolism; glycerol degradation via glycerol kinase pathway; sn-glycerol 3-phosphate from glycerol: step 1/1. With respect to regulation, activated by phosphorylation and inhibited by fructose 1,6-bisphosphate (FBP). Functionally, key enzyme in the regulation of glycerol uptake and metabolism. Catalyzes the phosphorylation of glycerol to yield sn-glycerol 3-phosphate. This chain is Glycerol kinase, found in Pediococcus pentosaceus (strain ATCC 25745 / CCUG 21536 / LMG 10740 / 183-1w).